A 361-amino-acid polypeptide reads, in one-letter code: Fructose-1,6-bisphosphatase class 1 2 (361 aa).

4 residues coordinate Mg(2+): Glu-110, Asp-134, Leu-136, and Asp-137. Residues 137 to 140, Asn-231, Tyr-264, and Lys-294 contribute to the substrate site; that span reads DGSS. Glu-300 contacts Mg(2+).

It belongs to the FBPase class 1 family. Homotetramer. Mg(2+) serves as cofactor.

It localises to the cytoplasm. The catalysed reaction is beta-D-fructose 1,6-bisphosphate + H2O = beta-D-fructose 6-phosphate + phosphate. It participates in carbohydrate biosynthesis; gluconeogenesis. The sequence is that of Fructose-1,6-bisphosphatase class 1 2 from Salinibacter ruber (strain DSM 13855 / M31).